Reading from the N-terminus, the 301-residue chain is Methionyl-tRNA formyltransferase (301 aa).

109 to 112 contacts (6S)-5,6,7,8-tetrahydrofolate; that stretch reads SLLP.

The protein belongs to the Fmt family.

The enzyme catalyses L-methionyl-tRNA(fMet) + (6R)-10-formyltetrahydrofolate = N-formyl-L-methionyl-tRNA(fMet) + (6S)-5,6,7,8-tetrahydrofolate + H(+). Functionally, attaches a formyl group to the free amino group of methionyl-tRNA(fMet). The formyl group appears to play a dual role in the initiator identity of N-formylmethionyl-tRNA by promoting its recognition by IF2 and preventing the misappropriation of this tRNA by the elongation apparatus. The chain is Methionyl-tRNA formyltransferase from Novosphingobium aromaticivorans (strain ATCC 700278 / DSM 12444 / CCUG 56034 / CIP 105152 / NBRC 16084 / F199).